A 549-amino-acid chain; its full sequence is Cobalt-dependent inorganic pyrophosphatase (549 aa).

2 consecutive CBS domains span residues 74–130 (EMDK…IWDS) and 252–310 (MTKD…VIQV). Residues lysine 100, 116-119 (STSN), threonine 253, valine 258, and 278-280 (YSN) each bind AMP.

The protein belongs to the PPase family. As to quaternary structure, homodimer. Co(2+) is required as a cofactor. It depends on Mn(2+) as a cofactor. The cofactor is Mg(2+).

The catalysed reaction is diphosphate + H2O = 2 phosphate + H(+). With respect to regulation, inhibited by AMP and ADP with 25% and 35% of activity remaining, respectively, at saturating conditions. Activated 5-fold by diadenosine polyphosphates(Ap[n]A) with n&gt;2 (Ap3A, Ap4A, Ap5A, Ap6A) at saturating conditions. This Clostridium perfringens (strain 13 / Type A) protein is Cobalt-dependent inorganic pyrophosphatase.